A 284-amino-acid chain; its full sequence is 4-hydroxybenzoate octaprenyltransferase (284 aa).

Helical transmembrane passes span 19–39 (IPIL…SHGL), 42–62 (ISYL…GCII), 85–105 (GQLS…VAFI), 107–127 (VLFL…LAIL), 134–154 (FFAI…FMAF), 165–185 (AWIF…IYAL), 211–231 (ILLF…YCDF), 233–253 (SFFY…YFLY), and 261–281 (CINA…IAVI).

Belongs to the UbiA prenyltransferase family. Requires Mg(2+) as cofactor.

The protein resides in the cell inner membrane. The catalysed reaction is all-trans-octaprenyl diphosphate + 4-hydroxybenzoate = 4-hydroxy-3-(all-trans-octaprenyl)benzoate + diphosphate. Its pathway is cofactor biosynthesis; ubiquinone biosynthesis. Functionally, catalyzes the prenylation of para-hydroxybenzoate (PHB) with an all-trans polyprenyl group. Mediates the second step in the final reaction sequence of ubiquinone-8 (UQ-8) biosynthesis, which is the condensation of the polyisoprenoid side chain with PHB, generating the first membrane-bound Q intermediate 3-octaprenyl-4-hydroxybenzoate. This chain is 4-hydroxybenzoate octaprenyltransferase, found in Francisella tularensis subsp. tularensis (strain FSC 198).